Consider the following 247-residue polypeptide: Oocyte zinc finger protein XlCOF20 (247 aa).

8 C2H2-type zinc fingers span residues 6–28, 34–56, 62–84, 90–112, 118–140, 146–168, 174–196, and 225–247; these read YDCR…QRVH, FPCT…QRVH, FICS…LRVH, FVCT…QRVH, FTCT…LRVH, FVCT…LRVH, FMCA…QRIC, and QSCA…MRVH.

Belongs to the krueppel C2H2-type zinc-finger protein family.

The protein localises to the nucleus. May be involved in transcriptional regulation. The polypeptide is Oocyte zinc finger protein XlCOF20 (Xenopus laevis (African clawed frog)).